The chain runs to 1014 residues: Resistance to glucose repression protein 1 (1014 aa).

The interval 1–63 is disordered; it reads MSTNLANYFA…AVQAKNDDDF (63 aa). Serine 2 carries the post-translational modification N-acetylserine. A compositionally biased stretch (basic and acidic residues) spans 11-34; that stretch reads GKKDIENEHVNRNASHESNSKSDV. At threonine 73 the chain carries Phosphothreonine. Serine 75 bears the Phosphoserine mark. Disordered stretches follow at residues 90-144 and 236-270; these read LGRS…YLIP and SEGNAQSEEEHDLERGYGSDDENSKRISMPTKNSK. A compositionally biased stretch (low complexity) spans 104 to 115; that stretch reads YDNSSNNSSSNS. Phosphoserine is present on residues serine 242 and serine 254. Over residues 247 to 260 the composition is skewed to basic and acidic residues; the sequence is DLERGYGSDDENSK. A Nuclear localization signal motif is present at residues 277–283; the sequence is KPILKKR. The residue at position 311 (serine 311) is a Phosphoserine. The interval 340–463 is disordered; the sequence is YPKESNSSVS…SEKSNKPTKN (124 aa). Composition is skewed to polar residues over residues 343–352, 361–370, 389–407, and 415–455; these read ESNSSVSLKS, STIPNPVGEN, HVQNNRSTAQSNKSILENS, and LDQN…NPSE. Serine 421 carries the post-translational modification Phosphoserine. Tyrosine 480 bears the Phosphotyrosine mark. Residue serine 490 is modified to Phosphoserine. Disordered stretches follow at residues 531 to 557 and 570 to 591; these read EHLNKNTSDDDTSSQSSSSSHSDDEEH and SDSGVHSPITDNSSVASSTTSR. Phosphoserine is present on residues serine 570, serine 572, and serine 576. Polar residues predominate over residues 578–591; that stretch reads ITDNSSVASSTTSR. The Nuclear localization signal motif lies at 595 to 599; the sequence is RPIIK. Serine 610, serine 614, and serine 680 each carry phosphoserine. The tract at residues 690–897 is disordered; that stretch reads SKEKHVPQLH…QSFRIVNNTP (208 aa). A compositionally biased stretch (low complexity) spans 722 to 740; sequence YSSSSDSEQQFIEDSQYNS. Acidic residues predominate over residues 741-758; sequence SDDEEEEDDDDQEVDDNH. Composition is skewed to polar residues over residues 770–802 and 822–833; these read LGKSGSTNSLYDLAQPSLSSATPQQKNPTNFTG and RNSSSGNFIFNS. The Nuclear localization signal motif lies at 873–879; sequence KKKALPK. Polar residues predominate over residues 884 to 897; sequence SDSSQSFRIVNNTP. Threonine 896 carries the post-translational modification Phosphothreonine. A Phosphoserine modification is found at serine 898. Over residues 959 to 972 the composition is skewed to basic and acidic residues; the sequence is KKVDSVQTTRKEAS. The interval 959-982 is disordered; that stretch reads KKVDSVQTTRKEASLTDSSNESLH. Phosphoserine is present on serine 980.

Interacts with SAK1.

It localises to the nucleus. Its function is as follows. Involved in RNA processing and negative regulation of glucose repression. Regulates the level of two antigens, P43 and P70. Binds to protein phosphatase type 1. Functions with REG2 and SNF1 protein kinase to regulate growth. Might regulate SNF1 directly or indirectly. This chain is Resistance to glucose repression protein 1 (REG1), found in Saccharomyces cerevisiae (strain ATCC 204508 / S288c) (Baker's yeast).